A 444-amino-acid chain; its full sequence is Probable polygalacturonase At1g80170 (444 aa).

Positions 1-28 (MSYSRGGTLVTLLLLLVVASSLALTANA) are cleaved as a signal peptide. PbH1 repeat units lie at residues 208–234 (CRRV…HISV), 235–256 (SRGI…SIVK), 258–278 (STQI…SIGS), 288–309 (VRDI…RIKT), 317–338 (VSKI…IIDQ), and 351–378 (TSAI…KISC). Catalysis depends on Asp249, which acts as the Proton donor. His272 is an active-site residue.

The protein belongs to the glycosyl hydrolase 28 family. As to expression, expressed in young, mature and dehiscing anthers. Found in stems, but not in roots or in abscission zone of floral organs.

It localises to the secreted. The protein resides in the cell wall. It catalyses the reaction (1,4-alpha-D-galacturonosyl)n+m + H2O = (1,4-alpha-D-galacturonosyl)n + (1,4-alpha-D-galacturonosyl)m.. The protein is Probable polygalacturonase At1g80170 of Arabidopsis thaliana (Mouse-ear cress).